The chain runs to 373 residues: Dual-specificity RNA methyltransferase RlmN (373 aa).

The active-site Proton acceptor is glutamate 94. A Radical SAM core domain is found at 100 to 339; sequence EDDRATLCVS…VIVRKTRGDD (240 aa). Residues cysteine 107 and cysteine 344 are joined by a disulfide bond. Residues cysteine 114, cysteine 118, and cysteine 121 each contribute to the [4Fe-4S] cluster site. S-adenosyl-L-methionine is bound by residues 168 to 169, serine 200, 222 to 224, and asparagine 301; these read GE and SIH. Catalysis depends on cysteine 344, which acts as the S-methylcysteine intermediate.

The protein belongs to the radical SAM superfamily. RlmN family. [4Fe-4S] cluster is required as a cofactor.

It localises to the cytoplasm. The catalysed reaction is adenosine(2503) in 23S rRNA + 2 reduced [2Fe-2S]-[ferredoxin] + 2 S-adenosyl-L-methionine = 2-methyladenosine(2503) in 23S rRNA + 5'-deoxyadenosine + L-methionine + 2 oxidized [2Fe-2S]-[ferredoxin] + S-adenosyl-L-homocysteine. It catalyses the reaction adenosine(37) in tRNA + 2 reduced [2Fe-2S]-[ferredoxin] + 2 S-adenosyl-L-methionine = 2-methyladenosine(37) in tRNA + 5'-deoxyadenosine + L-methionine + 2 oxidized [2Fe-2S]-[ferredoxin] + S-adenosyl-L-homocysteine. Its function is as follows. Specifically methylates position 2 of adenine 2503 in 23S rRNA and position 2 of adenine 37 in tRNAs. m2A2503 modification seems to play a crucial role in the proofreading step occurring at the peptidyl transferase center and thus would serve to optimize ribosomal fidelity. This Shewanella sp. (strain MR-7) protein is Dual-specificity RNA methyltransferase RlmN.